The following is a 146-amino-acid chain: Hemoglobin subunit beta-1 (146 aa).

The Globin domain maps to 2-146 (EWTDQERATI…VVSALGKQYH (145 aa)). Positions 63 and 92 each coordinate heme b.

It belongs to the globin family. Hb1 is a heterotetramer of two alpha-1 chains and two beta-1 chains. Hb2 is a heterotetramer of two alpha-2 chains and two beta-1 chains. HbC is a heterotetramer of two alpha-1 chains and two beta-2 chains. As to expression, red blood cells.

Its function is as follows. Involved in oxygen transport from gills to the various peripheral tissues. This chain is Hemoglobin subunit beta-1, found in Eleginops maclovinus (Patagonian blennie).